The sequence spans 148 residues: Transcriptional regulator MraZ (148 aa).

SpoVT-AbrB domains follow at residues 5-51 and 80-123; these read VATV…PLPE and AHDI…NEAR.

Belongs to the MraZ family. In terms of assembly, forms oligomers.

Its subcellular location is the cytoplasm. It is found in the nucleoid. The sequence is that of Transcriptional regulator MraZ from Thiobacillus denitrificans (strain ATCC 25259 / T1).